A 113-amino-acid polypeptide reads, in one-letter code: MSETLKRLSAVIESRKPANGGDPDKSYVARLFSKGDDAILKKIGEEATELVMAAKDARAGADKSKVLYECADLWFHSAVLLAQFDLTPQDVVNELARREGISGIEEKAARKAD.

This sequence belongs to the PRA-PH family.

Its subcellular location is the cytoplasm. It catalyses the reaction 1-(5-phospho-beta-D-ribosyl)-ATP + H2O = 1-(5-phospho-beta-D-ribosyl)-5'-AMP + diphosphate + H(+). It functions in the pathway amino-acid biosynthesis; L-histidine biosynthesis; L-histidine from 5-phospho-alpha-D-ribose 1-diphosphate: step 2/9. This Janthinobacterium sp. (strain Marseille) (Minibacterium massiliensis) protein is Phosphoribosyl-ATP pyrophosphatase.